A 339-amino-acid polypeptide reads, in one-letter code: Protein FAM50A (339 aa).

The disordered stretch occupies residues 1-31; the sequence is MAQYKGAASEAGRAMHLMKKREKQREQMEQM. Ala2 is subject to N-acetylalanine. Lys100 is covalently cross-linked (Glycyl lysine isopeptide (Lys-Gly) (interchain with G-Cter in SUMO2)). Positions 150–177 are disordered; that stretch reads TTKKKKLGKNPDVDTSFLPDRDREEEEN. The Nuclear localization signal signature appears at 152–155; it reads KKKK. A compositionally biased stretch (basic and acidic residues) spans 168 to 177; the sequence is PDRDREEEEN.

Belongs to the FAM50 family. In terms of assembly, interacts with EFTUD2, a component of the spliceosome U5 complex. Interacts with DDX41, a component of the spliceosome C complex. In terms of tissue distribution, widely expressed in embryonic and adult tissues.

The protein resides in the nucleus. Its function is as follows. Probably involved in the regulation of pre-mRNA splicing. The chain is Protein FAM50A (Fam50a) from Mus musculus (Mouse).